Here is a 391-residue protein sequence, read N- to C-terminus: Phosphoglycerate kinase (391 aa).

Substrate-binding positions include 21–23, Arg-36, 59–62, Arg-113, and Arg-146; these read DLN and HLGR. ATP contacts are provided by residues Lys-197, Glu-319, and 345 to 348; that span reads GGDT.

It belongs to the phosphoglycerate kinase family. In terms of assembly, monomer.

The protein resides in the cytoplasm. It carries out the reaction (2R)-3-phosphoglycerate + ATP = (2R)-3-phospho-glyceroyl phosphate + ADP. It functions in the pathway carbohydrate degradation; glycolysis; pyruvate from D-glyceraldehyde 3-phosphate: step 2/5. The protein is Phosphoglycerate kinase of Shewanella baltica (strain OS185).